The primary structure comprises 374 residues: Anthranilate O-methyltransferase 2 (374 aa).

Tyrosine 18 serves as a coordination point for S-adenosyl-L-homocysteine. Glutamine 25 serves as a coordination point for anthranilate. Positions 59, 64, 98, 99, 142, and 143 each coordinate S-adenosyl-L-homocysteine. Tryptophan 164 provides a ligand contact to anthranilate. Residues glutamate 261 and phenylalanine 263 each contribute to the Mg(2+) site.

It belongs to the methyltransferase superfamily. Type-7 methyltransferase family. SABATH subfamily.

The enzyme catalyses anthranilate + S-adenosyl-L-methionine = O-methyl anthranilate + S-adenosyl-L-homocysteine. In terms of biological role, methyltransferase involved in the biosynthesis of methyl anthranilate in response to stresses. Utilizes anthranilic acid as substrate. Produces exclusively the O-methyl ester. The protein is Anthranilate O-methyltransferase 2 (AAMT2) of Zea mays (Maize).